Consider the following 643-residue polypeptide: Macrolide export ATP-binding/permease protein MacB (643 aa).

The 239-residue stretch at 6-244 (IELKGVSRVF…QVRSPFGVRH (239 aa)) folds into the ABC transporter domain. 42–49 (GASGSGKS) serves as a coordination point for ATP. A run of 4 helical transmembrane segments spans residues 270–290 (VLTLLGIVIGVASVIVMLAIG), 518–538 (LTILLGSIAAISLLVGGIGVM), 569–589 (FLIEAVVVSALGGLIGVVIGL), and 606–626 (LMPIVWAFGCAFVTGLLFGYL).

It belongs to the ABC transporter superfamily. Macrolide exporter (TC 3.A.1.122) family. In terms of assembly, homodimer.

The protein localises to the cell inner membrane. In terms of biological role, non-canonical ABC transporter that contains transmembrane domains (TMD), which form a pore in the inner membrane, and an ATP-binding domain (NBD), which is responsible for energy generation. Confers resistance against macrolides. The polypeptide is Macrolide export ATP-binding/permease protein MacB (Wolinella succinogenes (strain ATCC 29543 / DSM 1740 / CCUG 13145 / JCM 31913 / LMG 7466 / NCTC 11488 / FDC 602W) (Vibrio succinogenes)).